Consider the following 1140-residue polypeptide: Eukaryotic translation initiation factor 3 subunit A (1140 aa).

Residues 319-502 form the PCI domain; the sequence is LQRMAAHVLL…NSIYFGTDLT (184 aa). Basic and acidic residues-rich tracts occupy residues 589 to 624, 830 to 900, and 921 to 984; these read QNNAREEEEARRQEEESRKAKLAEQKRLEQEQEERE, AAEE…RGGD, and ERND…EPDS. Disordered regions lie at residues 589–632 and 830–1140; these read QNNA…QNEI and AAEE…VKRR. Over residues 987–998 the composition is skewed to low complexity; it reads AAGAKDAGGAPA. 3 stretches are compositionally biased toward basic and acidic residues: residues 999–1050, 1058–1086, and 1109–1130; these read SRDD…EPQR, DAPRQSDRDNRRPGGERRDRDGRDVRGDQ, and PRDEKPAAKRDQPQDKENKGGD.

The protein belongs to the eIF-3 subunit A family. Component of the eukaryotic translation initiation factor 3 (eIF-3) complex. The eIF-3 complex interacts with pix.

It localises to the cytoplasm. Its function is as follows. RNA-binding component of the eukaryotic translation initiation factor 3 (eIF-3) complex, which is involved in protein synthesis of a specialized repertoire of mRNAs and, together with other initiation factors, stimulates binding of mRNA and methionyl-tRNAi to the 40S ribosome. The eIF-3 complex specifically targets and initiates translation of a subset of mRNAs involved in cell proliferation. This Drosophila ananassae (Fruit fly) protein is Eukaryotic translation initiation factor 3 subunit A.